Consider the following 229-residue polypeptide: MEGASFGAGRAGAAFDPVSFARRPQTLLRVVSWVFSIAVFGPIVNEGYVNSDSGPELRCVFNGNAGACRFGVVLGLGAFIACVAFLLLDVRFQQISSVRDRRRAVLLDLGFSGVWSFLWFVGFCFLTNQWQRTTPGPGTAQAGDAARAAIAFSFFSILSWVALTVKALQRFRLGTDMSLFATDQLGTGAAQAYPGYPVGSGVEGTETYQSPPFTETLDTSSKGYQVPAY.

M1 bears the N-acetylmethionine mark. Positions 20 to 172 constitute an MARVEL domain; it reads FARRPQTLLR…LTVKALQRFR (153 aa). The next 4 helical transmembrane spans lie at 30–50, 70–90, 105–125, and 148–168; these read VVSW…GYVN, FGVV…LLDV, VLLD…GFCF, and AAIA…VKAL. Residues 209-223 show a composition bias toward polar residues; sequence QSPPFTETLDTSSKG. Positions 209–229 are disordered; the sequence is QSPPFTETLDTSSKGYQVPAY.

Belongs to the synaptogyrin family. In terms of assembly, interacts (via N-terminus) with SLC6A3 (via N-terminus). May interact with VMAT2. Specifically expressed in brain. Found in the brain across the dorsal and ventral corpus striatum as well as in the cortex.

Its subcellular location is the cytoplasmic vesicle. It localises to the secretory vesicle. It is found in the synaptic vesicle membrane. The protein resides in the synapse. Functionally, may play a role in regulated exocytosis. May indirectly regulate the activity of the plasma membrane dopamine transporter SLC6A3 and thereby regulate dopamine transport back from the synaptic cleft into the presynaptic terminal. This Mus musculus (Mouse) protein is Synaptogyrin-3.